We begin with the raw amino-acid sequence, 207 residues long: Cytochrome c biogenesis ATP-binding export protein CcmA (207 aa).

One can recognise an ABC transporter domain in the interval 4 to 207 (LEVRELLCER…RISLTQTRAV (204 aa)). Position 36 to 43 (36 to 43 (GSNGAGKT)) interacts with ATP.

It belongs to the ABC transporter superfamily. CcmA exporter (TC 3.A.1.107) family. As to quaternary structure, the complex is composed of two ATP-binding proteins (CcmA) and two transmembrane proteins (CcmB).

It localises to the cell inner membrane. It carries out the reaction heme b(in) + ATP + H2O = heme b(out) + ADP + phosphate + H(+). In terms of biological role, part of the ABC transporter complex CcmAB involved in the biogenesis of c-type cytochromes; once thought to export heme, this seems not to be the case, but its exact role is uncertain. Responsible for energy coupling to the transport system. The protein is Cytochrome c biogenesis ATP-binding export protein CcmA of Shigella dysenteriae serotype 1 (strain Sd197).